The primary structure comprises 123 residues: Large ribosomal subunit protein uL14 (123 aa).

This sequence belongs to the universal ribosomal protein uL14 family. As to quaternary structure, part of the 50S ribosomal subunit. Forms a cluster with proteins L3 and L19. In the 70S ribosome, L14 and L19 interact and together make contacts with the 16S rRNA in bridges B5 and B8.

Functionally, binds to 23S rRNA. Forms part of two intersubunit bridges in the 70S ribosome. In Blochmanniella pennsylvanica (strain BPEN), this protein is Large ribosomal subunit protein uL14.